We begin with the raw amino-acid sequence, 361 residues long: tRNA(Ile)-lysidine synthase (361 aa).

Residue 32 to 37 coordinates ATP; it reads SGGPDS.

The protein belongs to the tRNA(Ile)-lysidine synthase family.

The protein localises to the cytoplasm. It carries out the reaction cytidine(34) in tRNA(Ile2) + L-lysine + ATP = lysidine(34) in tRNA(Ile2) + AMP + diphosphate + H(+). In terms of biological role, ligates lysine onto the cytidine present at position 34 of the AUA codon-specific tRNA(Ile) that contains the anticodon CAU, in an ATP-dependent manner. Cytidine is converted to lysidine, thus changing the amino acid specificity of the tRNA from methionine to isoleucine. The protein is tRNA(Ile)-lysidine synthase of Bradyrhizobium diazoefficiens (strain JCM 10833 / BCRC 13528 / IAM 13628 / NBRC 14792 / USDA 110).